The chain runs to 425 residues: FLEQQNKVLETKWKLLQEQGTKGTTKRANLDPLFEKYIADLKKYLDNLISEKGRLQQELKNLQLLVEDYKKKYEDEINKRTKAENDFVLLKKDVDAAYMVKTELEAKVDTLTSEINFLRTRDAAELSQVHDQVTDTSVVLTMDNNRDLNLDSIIKEVKCQYEQIAQRSKLEAEALYDQKYKQLQQTVEGHGDSIKNSKTEISDLNRKIQRLKAEIENVKKQIASLNQSIAGAEERGNLSLKDAEKKLKDLEDAERKLKADMARQLKEYQELMSAKLALNLEISTYRYMLEGEEGRISGQIVNKVSISVLSGGSSVYTALGGAAGGMGGGGGGGMGSGHGGGYGGMVFGGGMGCGMGDGMGGGGMGGGMGSGHGGGYGHGGAVCFGAGGMGYEGGSMHGGGSSYGHSGGKTSVAIASTTSTTKKTY.

The segment at 1 to 16 (FLEQQNKVLETKWKLL) is coil 1A. An IF rod domain is found at 1–296 (FLEQQNKVLE…YMLEGEEGRI (296 aa)). Residues 17-37 (QEQGTKGTTKRANLDPLFEKY) form a linker 1 region. The coil 1B stretch occupies residues 38 to 129 (IADLKKYLDN…TRDAAELSQV (92 aa)). A linker 12 region spans residues 130-153 (HDQVTDTSVVLTMDNNRDLNLDSI). Residues 154–292 (IKEVKCQYEQ…STYRYMLEGE (139 aa)) are coil 2. Positions 293-425 (EGRISGQIVN…STTSTTKKTY (133 aa)) are tail.

The protein belongs to the intermediate filament family. Heterotetramer of two type I and two type II keratins.

This chain is Keratin, type II cytoskeletal I, found in Xenopus laevis (African clawed frog).